A 109-amino-acid chain; its full sequence is MSEFKRIPPEHAQALREQGAVVVDIRDQPTYAAGHITGAQHVDNVNIADFIRAADLDAPVIVACYHGNSSQSAAAYLVSQGFSDVYSLDGGFELWRTTYPAEISSGNSQ.

One can recognise a Rhodanese domain in the interval 16–104 (REQGAVVVDI…WRTTYPAEIS (89 aa)). The Cysteine persulfide intermediate role is filled by cysteine 64.

Belongs to the GlpE family.

It localises to the cytoplasm. The enzyme catalyses thiosulfate + hydrogen cyanide = thiocyanate + sulfite + 2 H(+). The catalysed reaction is thiosulfate + [thioredoxin]-dithiol = [thioredoxin]-disulfide + hydrogen sulfide + sulfite + 2 H(+). In terms of biological role, transferase that catalyzes the transfer of sulfur from thiosulfate to thiophilic acceptors such as cyanide or dithiols. May function in a CysM-independent thiosulfate assimilation pathway by catalyzing the conversion of thiosulfate to sulfite, which can then be used for L-cysteine biosynthesis. The sequence is that of Thiosulfate sulfurtransferase GlpE from Pseudomonas fluorescens (strain SBW25).